Reading from the N-terminus, the 165-residue chain is Glutamyl-tRNA(Gln) amidotransferase subunit F, mitochondrial (165 aa).

The transit peptide at 1–19 (MKSILRSTTRNLITSSRRF) directs the protein to the mitochondrion.

This sequence belongs to the GatF family. As to quaternary structure, subunit of the heterotrimeric GatFAB amidotransferase (AdT) complex, composed of A, B and F subunits.

The protein localises to the mitochondrion inner membrane. The catalysed reaction is L-glutamyl-tRNA(Gln) + L-glutamine + ATP + H2O = L-glutaminyl-tRNA(Gln) + L-glutamate + ADP + phosphate + H(+). Functionally, allows the formation of correctly charged Gln-tRNA(Gln) through the transamidation of misacylated Glu-tRNA(Gln) in the mitochondria. The reaction takes place in the presence of glutamine and ATP through an activated gamma-phospho-Glu-tRNA(Gln). Required for proper protein synthesis within the mitochondrion. This Candida albicans (strain SC5314 / ATCC MYA-2876) (Yeast) protein is Glutamyl-tRNA(Gln) amidotransferase subunit F, mitochondrial.